A 168-amino-acid polypeptide reads, in one-letter code: Peptide deformylase (168 aa).

Positions 91 and 133 each coordinate Fe cation. E134 is a catalytic residue. Residue H137 participates in Fe cation binding.

Belongs to the polypeptide deformylase family. The cofactor is Fe(2+).

It carries out the reaction N-terminal N-formyl-L-methionyl-[peptide] + H2O = N-terminal L-methionyl-[peptide] + formate. In terms of biological role, removes the formyl group from the N-terminal Met of newly synthesized proteins. Requires at least a dipeptide for an efficient rate of reaction. N-terminal L-methionine is a prerequisite for activity but the enzyme has broad specificity at other positions. The sequence is that of Peptide deformylase from Endomicrobium trichonymphae.